Here is a 406-residue protein sequence, read N- to C-terminus: Tryptophan synthase beta chain (406 aa).

N6-(pyridoxal phosphate)lysine is present on K99.

This sequence belongs to the TrpB family. Tetramer of two alpha and two beta chains. The cofactor is pyridoxal 5'-phosphate.

The catalysed reaction is (1S,2R)-1-C-(indol-3-yl)glycerol 3-phosphate + L-serine = D-glyceraldehyde 3-phosphate + L-tryptophan + H2O. It functions in the pathway amino-acid biosynthesis; L-tryptophan biosynthesis; L-tryptophan from chorismate: step 5/5. The beta subunit is responsible for the synthesis of L-tryptophan from indole and L-serine. The protein is Tryptophan synthase beta chain of Methylobacterium nodulans (strain LMG 21967 / CNCM I-2342 / ORS 2060).